The sequence spans 1367 residues: Probable serine/threonine-protein kinase pkgA (1367 aa).

4 disordered regions span residues 140–164 (IDEN…NKTI), 264–429 (KNGK…LLSR), 456–556 (PTPL…SRKP), and 771–792 (PREE…SDPV). Residues 143-162 (NNNNNNNNNNNNNNNNNKNK) are compositionally biased toward low complexity. A compositionally biased stretch (pro residues) spans 271 to 282 (IKRPSPPLPPPQ). Positions 287–326 (EQQKEQKEQQKEQQKEQQKEQQKEQEQKQQEPQKYVKFEI) are enriched in basic and acidic residues. Positions 340 to 381 (ISSSNISNEISKQQQQQQQQQQQQQQQQQQQQQQQQQQQQQQ) are enriched in low complexity. Positions 399–421 (ANNNILTTPLSSQPTQSLETPST) are enriched in polar residues. A compositionally biased stretch (acidic residues) spans 506 to 517 (GEDEEEDEDDDN). The segment covering 531-544 (LKNKRPFKKTHVHH) has biased composition (basic residues). Residues 810–1236 (FEFIKPITKG…AEEIKSHPFF (427 aa)) enclose the Protein kinase domain. ATP is bound by residues 816–824 (ITKGGYGKV) and Lys-839. Asp-933 (proton acceptor) is an active-site residue. Disordered regions lie at residues 971–1034 (FSPT…PSNT), 1084–1134 (FIPP…HNIH), and 1288–1312 (QNQN…TATA). Over residues 979–1015 (NNQSSSSSSVSNIGGSNTIGSNISSTNNNNNNNNTTG) the composition is skewed to low complexity. The span at 1025-1034 (NTETPIPSNT) shows a compositional bias: polar residues. Low complexity-rich tracts occupy residues 1092–1125 (QQPI…QQTT) and 1294–1312 (SSTI…TATA). The AGC-kinase C-terminal domain occupies 1237-1347 (KSINWKTILT…VNFQSLLELN (111 aa)).

The protein belongs to the protein kinase superfamily. AGC Ser/Thr protein kinase family.

It carries out the reaction L-seryl-[protein] + ATP = O-phospho-L-seryl-[protein] + ADP + H(+). The catalysed reaction is L-threonyl-[protein] + ATP = O-phospho-L-threonyl-[protein] + ADP + H(+). The polypeptide is Probable serine/threonine-protein kinase pkgA (pkgA) (Dictyostelium discoideum (Social amoeba)).